Here is a 470-residue protein sequence, read N- to C-terminus: Putative multidrug resistance protein MdtD (470 aa).

At 1 to 11 the chain is on the periplasmic side; it reads MTELPDNTRWQ. The chain crosses the membrane as a helical span at residues 12–32; sequence LWIVALGFFMQSLDTTIVNTA. The Cytoplasmic portion of the chain corresponds to 33 to 48; it reads LPSMAKSLGESPLHMH. The helical transmembrane segment at 49-69 threads the bilayer; that stretch reads MVVVSYVLTVAVMLPASGWLA. Topologically, residues 70–76 are periplasmic; that stretch reads DKIGVRN. Residues 77-97 traverse the membrane as a helical segment; the sequence is IFFAAIVLFTLGSLFCALSGT. At 98 to 101 the chain is on the cytoplasmic side; it reads LNQL. A helical membrane pass occupies residues 102–124; that stretch reads VLARVLQGVGGAMMVPVGRLTVM. Topologically, residues 125–137 are periplasmic; sequence KIVPRAQYMAAMT. The helical transmembrane segment at 138–158 threads the bilayer; the sequence is FVTLPGQIGPLLGPALGGVLV. The Cytoplasmic portion of the chain corresponds to 159 to 164; it reads EYASWH. Residues 165 to 185 traverse the membrane as a helical segment; sequence WIFLINIPVGIVGAMATFMLM. Residues 186–196 are Periplasmic-facing; the sequence is PNYTIETRRFD. A helical transmembrane segment spans residues 197-217; it reads LPGFLLLAIGMAVLTLALDGS. The Cytoplasmic segment spans residues 218–221; sequence KSMG. Residues 222–242 form a helical membrane-spanning segment; that stretch reads ISPWTLAGLAAGGAAAILLYL. Residues 243 to 262 are Periplasmic-facing; that stretch reads LHAKKNSGALFSLRLFRTPT. The chain crosses the membrane as a helical span at residues 263–283; that stretch reads FSLGLLGSFAGRIGSGMLPFM. The Cytoplasmic portion of the chain corresponds to 284–285; the sequence is TP. Residues 286-306 form a helical membrane-spanning segment; the sequence is VFLQIGLGFSPFHAGLMMIPM. The Periplasmic portion of the chain corresponds to 307–341; the sequence is VLGSMGMKRIVVQIVNRFGYRRVLVATTLGLALVS. A helical membrane pass occupies residues 342-362; that stretch reads LLFMSVALLGWYYLLPLVLLL. Over 363 to 395 the chain is Cytoplasmic; sequence QGMVNSARFSSMNTLTLKDLPDTLASSGNSLLS. The chain crosses the membrane as a helical span at residues 396–416; it reads MIMQLSMSIGVTIAGMLLGMF. At 417–430 the chain is on the periplasmic side; it reads GQQHIGIDSSATHH. A helical transmembrane segment spans residues 431 to 451; the sequence is VFMYTWLCMAVIIALPAIIFA. The Cytoplasmic segment spans residues 452–470; that stretch reads RVPNDTQQNMVISRRKRSL.

The protein belongs to the major facilitator superfamily. TCR/Tet family.

It is found in the cell inner membrane. The polypeptide is Putative multidrug resistance protein MdtD (Salmonella heidelberg (strain SL476)).